A 223-amino-acid polypeptide reads, in one-letter code: Endonuclease V (223 aa).

Mg(2+)-binding residues include aspartate 35 and aspartate 103.

This sequence belongs to the endonuclease V family. It depends on Mg(2+) as a cofactor.

It is found in the cytoplasm. It carries out the reaction Endonucleolytic cleavage at apurinic or apyrimidinic sites to products with a 5'-phosphate.. Its function is as follows. DNA repair enzyme involved in the repair of deaminated bases. Selectively cleaves double-stranded DNA at the second phosphodiester bond 3' to a deoxyinosine leaving behind the intact lesion on the nicked DNA. The sequence is that of Endonuclease V from Salmonella paratyphi A (strain ATCC 9150 / SARB42).